We begin with the raw amino-acid sequence, 255 residues long: Aspartate/glutamate leucyltransferase (255 aa).

It belongs to the R-transferase family. Bpt subfamily.

It is found in the cytoplasm. The catalysed reaction is N-terminal L-glutamyl-[protein] + L-leucyl-tRNA(Leu) = N-terminal L-leucyl-L-glutamyl-[protein] + tRNA(Leu) + H(+). It catalyses the reaction N-terminal L-aspartyl-[protein] + L-leucyl-tRNA(Leu) = N-terminal L-leucyl-L-aspartyl-[protein] + tRNA(Leu) + H(+). In terms of biological role, functions in the N-end rule pathway of protein degradation where it conjugates Leu from its aminoacyl-tRNA to the N-termini of proteins containing an N-terminal aspartate or glutamate. In Leptospira borgpetersenii serovar Hardjo-bovis (strain JB197), this protein is Aspartate/glutamate leucyltransferase.